We begin with the raw amino-acid sequence, 255 residues long: Cytochrome c oxidase subunit 2 (255 aa).

Residues 1 to 42 are Mitochondrial intermembrane-facing; the sequence is MKFFFFSFINYKVLNDAARPWQIGFQDPATPIMEGIVNLHHD. A helical membrane pass occupies residues 43–63; it reads IIFFLIIIIIFVSWILFRTLF. The Mitochondrial matrix portion of the chain corresponds to 64–83; that stretch reads LFNSKTNPVAYNFSHGTFIE. The chain crosses the membrane as a helical span at residues 84–104; the sequence is LLWTLTPSLVLIGIAVPSFAL. Residues 105–255 are Mitochondrial intermembrane-facing; the sequence is LYSIDEIIDP…IRWVQNKILD (151 aa). Residues His-187, Cys-222, Glu-224, Cys-226, His-230, and Met-233 each coordinate Cu cation. Position 224 (Glu-224) interacts with Mg(2+).

Belongs to the cytochrome c oxidase subunit 2 family. As to quaternary structure, component of the cytochrome c oxidase (complex IV, CIV), a multisubunit enzyme composed of a catalytic core of 3 subunits and several supernumerary subunits. The complex exists as a monomer or a dimer and forms supercomplexes (SCs) in the inner mitochondrial membrane with ubiquinol-cytochrome c oxidoreductase (cytochrome b-c1 complex, complex III, CIII). Requires Cu cation as cofactor.

It is found in the mitochondrion inner membrane. It carries out the reaction 4 Fe(II)-[cytochrome c] + O2 + 8 H(+)(in) = 4 Fe(III)-[cytochrome c] + 2 H2O + 4 H(+)(out). Component of the cytochrome c oxidase, the last enzyme in the mitochondrial electron transport chain which drives oxidative phosphorylation. The respiratory chain contains 3 multisubunit complexes succinate dehydrogenase (complex II, CII), ubiquinol-cytochrome c oxidoreductase (cytochrome b-c1 complex, complex III, CIII) and cytochrome c oxidase (complex IV, CIV), that cooperate to transfer electrons derived from NADH and succinate to molecular oxygen, creating an electrochemical gradient over the inner membrane that drives transmembrane transport and the ATP synthase. Cytochrome c oxidase is the component of the respiratory chain that catalyzes the reduction of oxygen to water. Electrons originating from reduced cytochrome c in the intermembrane space (IMS) are transferred via the dinuclear copper A center (CU(A)) of subunit 2 and heme A of subunit 1 to the active site in subunit 1, a binuclear center (BNC) formed by heme A3 and copper B (CU(B)). The BNC reduces molecular oxygen to 2 water molecules using 4 electrons from cytochrome c in the IMS and 4 protons from the mitochondrial matrix. This Cyanidium caldarium (Red alga) protein is Cytochrome c oxidase subunit 2 (COX2).